The chain runs to 194 residues: Probable WRKY transcription factor 51 (194 aa).

The tract at residues 58–97 is disordered; sequence SSETFTGESGGSGSATTLSKKESTNRGSKESDQTKETGHR. Residues 76–96 show a composition bias toward basic and acidic residues; the sequence is SKKESTNRGSKESDQTKETGH. A DNA-binding region (WRKY) is located at residues 104–169; that stretch reads SKIDVMDDGF…YEGVHNHESL (66 aa).

The protein belongs to the WRKY group II-c family. In terms of assembly, interacts with CAMBP25/VQ15.

The protein resides in the nucleus. In terms of biological role, transcription factor. Interacts specifically with the W box (5'-(T)TGAC[CT]-3'), a frequently occurring elicitor-responsive cis-acting element. Involved in defense responses. May act as positive regulator of salicylic acid (SA)-mediated signaling and negative regulator of jasmonic acid (JA)-mediated signaling. This is Probable WRKY transcription factor 51 (WRKY51) from Arabidopsis thaliana (Mouse-ear cress).